Here is a 316-residue protein sequence, read N- to C-terminus: Homoserine O-succinyltransferase (316 aa).

The active-site Acyl-thioester intermediate is the cysteine 142. Lysine 163 and serine 192 together coordinate substrate. Histidine 235 functions as the Proton acceptor in the catalytic mechanism. The active site involves glutamate 237. Arginine 249 contributes to the substrate binding site.

The protein belongs to the MetA family.

Its subcellular location is the cytoplasm. It catalyses the reaction L-homoserine + succinyl-CoA = O-succinyl-L-homoserine + CoA. It participates in amino-acid biosynthesis; L-methionine biosynthesis via de novo pathway; O-succinyl-L-homoserine from L-homoserine: step 1/1. Transfers a succinyl group from succinyl-CoA to L-homoserine, forming succinyl-L-homoserine. The chain is Homoserine O-succinyltransferase from Shewanella amazonensis (strain ATCC BAA-1098 / SB2B).